A 399-amino-acid polypeptide reads, in one-letter code: 3-methyl-2-oxobutanoate hydroxymethyltransferase 2, mitochondrial (399 aa).

The transit peptide at 1–90 (MSFSRLLTPR…ARRVTLATLR (90 aa)) directs the protein to the mitochondrion. Mg(2+) contacts are provided by D125 and D164. Residues 125–126 (DS), D164, and K194 each bind 3-methyl-2-oxobutanoate. Residue E196 participates in Mg(2+) binding. E264 functions as the Proton acceptor in the catalytic mechanism.

Belongs to the PanB family. Mg(2+) serves as cofactor.

The protein resides in the mitochondrion. It catalyses the reaction 3-methyl-2-oxobutanoate + (6R)-5,10-methylene-5,6,7,8-tetrahydrofolate + H2O = 2-dehydropantoate + (6S)-5,6,7,8-tetrahydrofolate. The protein operates within cofactor biosynthesis; (R)-pantothenate biosynthesis; (R)-pantoate from 3-methyl-2-oxobutanoate: step 1/2. In terms of biological role, catalyzes the reversible reaction in which hydroxymethyl group from 5,10-methylenetetrahydrofolate is transferred onto alpha-ketoisovalerate to form ketopantoate. The protein is 3-methyl-2-oxobutanoate hydroxymethyltransferase 2, mitochondrial (KPHMT2) of Oryza sativa subsp. japonica (Rice).